A 20-amino-acid polypeptide reads, in one-letter code: MINGWTGNILRINLTTGAIS.

The protein belongs to the AOR/FOR family. As to quaternary structure, forms various types of homooligomers. Requires [4Fe-4S] cluster as cofactor. It depends on Mo-molybdopterin as a cofactor.

Its subcellular location is the cell membrane. It carries out the reaction a (2R)-2-hydroxycarboxylate + A = a 2-oxocarboxylate + AH2. Is inhibited by cyanide. Is sensitive to oxygen. Oxidoreductase with an extremely broad substrate specificity that can reduce reversibly 2-oxocarboxylates to (2R)-hydroxycarboxylates. This is 2-oxo-acid reductase from Proteus hauseri.